Consider the following 466-residue polypeptide: Phytase A (466 aa).

The first 19 residues, 1-19 (MGVFVVLLSIATLFGSTSG), serve as a signal peptide directing secretion. Asn-27 carries an N-linked (GlcNAc...) asparagine glycan. A disulfide bridge links Cys-31 with Cys-40. 1D-myo-inositol hexakisphosphate is bound by residues Tyr-51, Arg-81, His-82, Arg-85, and Thr-88. 4 disulfide bridges follow: Cys-71-Cys-414, Cys-215-Cys-465, Cys-264-Cys-282, and Cys-436-Cys-444. His-82 functions as the Nucleophile in the catalytic mechanism. N-linked (GlcNAc...) asparagine glycosylation is found at Asn-105 and Asn-120. Arg-165 contacts 1D-myo-inositol hexakisphosphate. 2 N-linked (GlcNAc...) asparagine glycosylation sites follow: Asn-207 and Asn-230. Residue Lys-301 coordinates 1D-myo-inositol hexakisphosphate. N-linked (GlcNAc...) asparagine glycosylation is found at Asn-339 and Asn-352. Residues His-361 and Asp-362 each coordinate 1D-myo-inositol hexakisphosphate. Asn-376 carries N-linked (GlcNAc...) asparagine glycosylation.

Belongs to the histidine acid phosphatase family. Monomer.

The protein resides in the secreted. It catalyses the reaction 1D-myo-inositol hexakisphosphate + H2O = 1D-myo-inositol 1,2,4,5,6-pentakisphosphate + phosphate. The catalysed reaction is 1D-myo-inositol 1,2,4,5,6-pentakisphosphate + H2O = 1D-myo-inositol 1,2,5,6-tetrakisphosphate + phosphate. The enzyme catalyses 1D-myo-inositol 1,2,5,6-tetrakisphosphate + H2O = 1D-myo-inositol 1,2,6-trisphosphate + phosphate. It carries out the reaction 1D-myo-inositol 1,2,6-trisphosphate + H2O = 1D-myo-inositol 1,2-bisphosphate + phosphate. It catalyses the reaction 1D-myo-inositol 1,2-bisphosphate + H2O = 1D-myo-inositol 2-phosphate + phosphate. Functionally, catalyzes the phosphate monoester hydrolysis of phytic acid (myo-inositol hexakisphosphate), which results in the stepwise formation of myo-inositol pentakis-, tetrakis-, tris-, bis-, and monophosphates, as well as the liberation of inorganic phosphate. Myo-inositol 2-monophosphate is the end product. Has a broad substrate specificity and is also able to dephosphorylate other classic acid phosphatase substrates such as p-nitrophenyl phosphate, phenyl phosphate, fructose 1,6-bisphosphate, glucose 6-phosphate, 3-phosphoglycerate, as well as ADP and ATP. The protein is Phytase A of Aspergillus terreus.